The sequence spans 396 residues: Obg-like ATPase 1 (396 aa).

Positions 23–283 (LKIGIVGLPN…LSAEERQKYL (261 aa)) constitute an OBG-type G domain. 32–37 (NVGKST) provides a ligand contact to ATP. Residues serine 36 and threonine 56 each contribute to the Mg(2+) site. Leucine 231 lines the ATP pocket. The short motif at 267-274 (LELRLQEL) is the Nuclear export signal element. Lysine 294 carries the post-translational modification N6-acetyllysine. The TGS domain maps to 304 to 387 (QLEYFFTAGP…EDGDIIFFKF (84 aa)).

The protein belongs to the TRAFAC class OBG-HflX-like GTPase superfamily. OBG GTPase family. YchF/OLA1 subfamily. In terms of assembly, monomer. Mg(2+) is required as a cofactor.

The protein resides in the cytoplasm. It is found in the nucleus. Its subcellular location is the nucleolus. Its function is as follows. Hydrolyzes ATP, and can also hydrolyze GTP with lower efficiency. Has lower affinity for GTP. The polypeptide is Obg-like ATPase 1 (Bos taurus (Bovine)).